The chain runs to 196 residues: MEGNNSSSKSTTNPALDPDLDSPDQPGLEFAQFAAGCFWGVELAFQRVGGVVKTEVGYSQGNVHDPNYKLICSGTTEHAEAIRIQFDPNVCPYSNLLSLFWSRHDPTTLNRQGNDVGKQYRSGIYYYNDAQAQLARESLEAKQKEFMDKKIVTEILPAKRFYRAEEYHQQYLEKGGGRGCKQSAAKGCNDPIRCYG.

Polar residues predominate over residues 1-14; it reads MEGNNSSSKSTTNP. Residues 1–23 are disordered; it reads MEGNNSSSKSTTNPALDPDLDSP.

The protein belongs to the MsrA Met sulfoxide reductase family.

The enzyme catalyses L-methionyl-[protein] + [thioredoxin]-disulfide + H2O = L-methionyl-(S)-S-oxide-[protein] + [thioredoxin]-dithiol. The catalysed reaction is [thioredoxin]-disulfide + L-methionine + H2O = L-methionine (S)-S-oxide + [thioredoxin]-dithiol. Has an important function as a repair enzyme for proteins that have been inactivated by oxidation. Catalyzes the reversible oxidation-reduction of methionine sulfoxide in proteins to methionine. This is Peptide methionine sulfoxide reductase (E4) from Solanum lycopersicum (Tomato).